The chain runs to 492 residues: Probable ATP-citrate synthase subunit 2 (492 aa).

A Phosphoserine modification is found at serine 24.

The protein in the N-terminal section; belongs to the succinate/malate CoA ligase beta subunit family. This sequence in the C-terminal section; belongs to the succinate/malate CoA ligase alpha subunit family. As to quaternary structure, composed of two subunits.

The protein localises to the cytoplasm. It is found in the nucleus. It catalyses the reaction oxaloacetate + acetyl-CoA + ADP + phosphate = citrate + ATP + CoA. Its function is as follows. ATP citrate-lyase is the primary enzyme responsible for the synthesis of cytosolic acetyl-CoA. Has a central role in de novo lipid synthesis. The polypeptide is Probable ATP-citrate synthase subunit 2 (Schizosaccharomyces pombe (strain 972 / ATCC 24843) (Fission yeast)).